Reading from the N-terminus, the 132-residue chain is Small ribosomal subunit protein uS9 (132 aa).

The segment at 103–132 is disordered; the sequence is NGLLTRDDRTKERKKPGLKRARKAPQYTKR. Positions 114–132 are enriched in basic residues; sequence ERKKPGLKRARKAPQYTKR.

The protein belongs to the universal ribosomal protein uS9 family.

The polypeptide is Small ribosomal subunit protein uS9 (Dehalococcoides mccartyi (strain CBDB1)).